The chain runs to 105 residues: Large ribosomal subunit protein uL24 (105 aa).

The protein belongs to the universal ribosomal protein uL24 family. In terms of assembly, part of the 50S ribosomal subunit.

Its function is as follows. One of two assembly initiator proteins, it binds directly to the 5'-end of the 23S rRNA, where it nucleates assembly of the 50S subunit. Functionally, one of the proteins that surrounds the polypeptide exit tunnel on the outside of the subunit. This chain is Large ribosomal subunit protein uL24, found in Anaplasma marginale (strain St. Maries).